A 106-amino-acid polypeptide reads, in one-letter code: Terpredoxin (106 aa).

Positions 2–106 (PRVVFIDEQS…GLIVRVPLPA (105 aa)) constitute a 2Fe-2S ferredoxin-type domain. 4 residues coordinate [2Fe-2S] cluster: Cys-40, Cys-46, Cys-49, and Cys-87.

This sequence belongs to the adrenodoxin/putidaredoxin family. The cofactor is [2Fe-2S] cluster.

Its function is as follows. The oxidation of alpha-terpineol by cytochrome p450-TERP requires the participation of a flavoprotein, terpredoxin reductase, and an iron-sulfur protein, terpredoxin, to mediate the transfer of electrons from NADH to P450 for oxygen activation. The polypeptide is Terpredoxin (terPB) (Pseudomonas sp).